A 332-amino-acid chain; its full sequence is Casein kinase II subunit alpha (332 aa).

Residues 34–319 (YEVVRKVGRG…ALEAMTHPYF (286 aa)) form the Protein kinase domain. ATP-binding positions include 40–48 (VGRGKYSEV) and Lys63. The active-site Proton acceptor is the Asp151.

Belongs to the protein kinase superfamily. Ser/Thr protein kinase family. CK2 subfamily. Tetramer of two alpha and two beta chains (possible).

It carries out the reaction L-seryl-[protein] + ATP = O-phospho-L-seryl-[protein] + ADP + H(+). The enzyme catalyses L-threonyl-[protein] + ATP = O-phospho-L-threonyl-[protein] + ADP + H(+). In terms of biological role, casein kinases are operationally defined by their preferential utilization of acidic proteins such as caseins as substrates. The alpha chain contains the catalytic site. The polypeptide is Casein kinase II subunit alpha (ACK2) (Zea mays (Maize)).